We begin with the raw amino-acid sequence, 640 residues long: MLVVTLPDGSKREFEAPVRVADVAQSIGSGLAKAALGGIVDGKMVDTSFVIDKDSQLAIITDKSPEALEIVRHSTAHLLAYAVKELFPEAQVTIGPVIENGFYYDFSYHRPFTPDDLVALEKKMTELAKRDEPVTRTVMPRDEAVEFFKKQGENYKAELIASIPQGEDVSLYAEGKFTDLCRGPHVPSTGKLKVFKLMKLAGAYWRGDSKNEMLQRIYGTTWLRKEDQDAYLHMLEESEKRDHRRLGKQLDLFHFQEEAPGLIFWHPKGWSIWQEVEQYMRRVYQQEGYQEVKAPQILDRGLWEKSGHWENYKENMFTTESENRAYALKPMNCPGHVQIYNSGLHSYRELPLRFGEFGQCHRNEPSGALHGLMRVRGFTQDDGHIFCTEDQIQSEVAAFDKAVRAVYQDFGFTEVAVKLALRPAKRVGDDAIWDKAEEALRGALKASGQEWEELPGEGAFYGPKIEYHLKDSIGRTWQCGTIQVDFSMPARLGAEYVAENNSRKTPVMLHRAIVGSLERFIGILIENHTGNMPVWLAPTQAVVLNISGNSAAYAQQVQQLLKKQGFRIESDLRNEKITYKIREYALQKTPFLLIVGDKESESNTVAVRARGGVDLGVMPLDAFVARLQQDISQKVGPEPS.

The TGS domain maps to 1–61; that stretch reads MLVVTLPDGS…DKDSQLAIIT (61 aa). Residues 242 to 533 are catalytic; the sequence is DHRRLGKQLD…LIENHTGNMP (292 aa). Residues Cys-333, His-384, and His-510 each coordinate Zn(2+).

The protein belongs to the class-II aminoacyl-tRNA synthetase family. In terms of assembly, homodimer. Zn(2+) is required as a cofactor.

The protein localises to the cytoplasm. The enzyme catalyses tRNA(Thr) + L-threonine + ATP = L-threonyl-tRNA(Thr) + AMP + diphosphate + H(+). Functionally, catalyzes the attachment of threonine to tRNA(Thr) in a two-step reaction: L-threonine is first activated by ATP to form Thr-AMP and then transferred to the acceptor end of tRNA(Thr). Also edits incorrectly charged L-seryl-tRNA(Thr). The polypeptide is Threonine--tRNA ligase (Polynucleobacter necessarius subsp. necessarius (strain STIR1)).